Consider the following 485-residue polypeptide: Glutamate--tRNA ligase (485 aa).

Positions 12–22 (PSPTGEPHVGT) match the 'HIGH' region motif. 4 residues coordinate Zn(2+): cysteine 109, cysteine 111, cysteine 136, and histidine 138. A 'KMSKS' region motif is present at residues 253–257 (KLSKR). Lysine 256 lines the ATP pocket.

Belongs to the class-I aminoacyl-tRNA synthetase family. Glutamate--tRNA ligase type 1 subfamily. In terms of assembly, monomer. Zn(2+) serves as cofactor.

The protein localises to the cytoplasm. It catalyses the reaction tRNA(Glu) + L-glutamate + ATP = L-glutamyl-tRNA(Glu) + AMP + diphosphate. Its function is as follows. Catalyzes the attachment of glutamate to tRNA(Glu) in a two-step reaction: glutamate is first activated by ATP to form Glu-AMP and then transferred to the acceptor end of tRNA(Glu). In Agrobacterium fabrum (strain C58 / ATCC 33970) (Agrobacterium tumefaciens (strain C58)), this protein is Glutamate--tRNA ligase.